We begin with the raw amino-acid sequence, 372 residues long: Embryonic growth/differentiation factor 1 (372 aa).

The first 29 residues, 1-29 (MPPPQQGPCGHHLLLLLALLLPSLPLTRA), serve as a signal peptide directing secretion. The propeptide occupies 30–253 (PVPPGPAAAL…LCHPLARPRR (224 aa)). Residues 67-86 (RRRDPQETRSGSRRTSPGVT) form a disordered region. An N-linked (GlcNAc...) asparagine glycan is attached at asparagine 206. 3 disulfide bridges follow: cysteine 267–cysteine 337, cysteine 296–cysteine 369, and cysteine 300–cysteine 371.

It belongs to the TGF-beta family. Homodimer; disulfide-linked. In terms of tissue distribution, expressed in the brain.

The protein resides in the secreted. May mediate cell differentiation events during embryonic development. The protein is Embryonic growth/differentiation factor 1 (GDF1) of Homo sapiens (Human).